The following is a 357-amino-acid chain: BLOC-1-related complex subunit 6 (357 aa).

Residues 20–196 form a disordered region; the sequence is HQALVFGGGP…SGAGGGRRAT (177 aa). The segment covering 90–99 has biased composition (low complexity); that stretch reads GAGSRRGAPG. The span at 138–149 shows a compositional bias: acidic residues; that stretch reads EQQEEEDNDEEA. Residues 150–162 are compositionally biased toward low complexity; sequence AAGSRAGRSFSSR. At Ser168 the chain carries Phosphoserine. Phosphothreonine is present on Thr196. Ser199 bears the Phosphoserine mark. The interval 227 to 256 is disordered; that stretch reads LSGAPPPPPSAPARPCPAPAPTPTPAIPPI. The span at 230–256 shows a compositional bias: pro residues; it reads APPPPPSAPARPCPAPAPTPTPAIPPI.

This sequence belongs to the BORCS6 family. In terms of assembly, component of the BLOC-one-related complex (BORC) which is composed of BLOC1S1, BLOC1S2, BORCS5, BORCS6, BORCS7, BORCS8, KXD1 and SNAPIN.

The protein resides in the lysosome membrane. In terms of biological role, as part of the BORC complex may play a role in lysosomes movement and localization at the cell periphery. Associated with the cytosolic face of lysosomes, the BORC complex may recruit ARL8B and couple lysosomes to microtubule plus-end-directed kinesin motor. The chain is BLOC-1-related complex subunit 6 from Homo sapiens (Human).